The following is a 226-amino-acid chain: 7-cyano-7-deazaguanine synthase (226 aa).

7–17 (LSGGMDSLVTT) is a binding site for ATP. Residues Cys187, Cys195, Cys198, and Cys201 each coordinate Zn(2+).

It belongs to the QueC family. It depends on Zn(2+) as a cofactor.

It catalyses the reaction 7-carboxy-7-deazaguanine + NH4(+) + ATP = 7-cyano-7-deazaguanine + ADP + phosphate + H2O + H(+). It participates in purine metabolism; 7-cyano-7-deazaguanine biosynthesis. Its function is as follows. Catalyzes the ATP-dependent conversion of 7-carboxy-7-deazaguanine (CDG) to 7-cyano-7-deazaguanine (preQ(0)). This chain is 7-cyano-7-deazaguanine synthase, found in Chlorobium phaeobacteroides (strain DSM 266 / SMG 266 / 2430).